The chain runs to 328 residues: P2Y purinoceptor 6 (328 aa).

At 1–27 (MERDNGTIQAPGLPPTTCVYREDFKRL) the chain is on the extracellular side. Asn5 carries N-linked (GlcNAc...) asparagine glycosylation. Residues 28–48 (LLPPVYSVVLVVGLPLNVCVI) traverse the membrane as a helical segment. Residues 49 to 62 (AQICASRRTLTRSA) lie on the Cytoplasmic side of the membrane. A helical membrane pass occupies residues 63–83 (VYTLNLALADLLYACSLPLLI). The Extracellular segment spans residues 84-101 (YNYARGDHWPFGDLACRL). Cys99 and Cys177 are joined by a disulfide. The helical transmembrane segment at 102–122 (VRFLFYANLHGSILFLTCISF) threads the bilayer. Residues 123 to 144 (QRYLGICHPLAPWHKRGGRRAA) are Cytoplasmic-facing. Residues 145–165 (WVVCGVVWLVVTAQCLPTAVF) form a helical membrane-spanning segment. At 166–194 (AATGIQRNRTVCYDLSPPILSTRYLPYGM) the chain is on the extracellular side. Residue Asn173 is glycosylated (N-linked (GlcNAc...) asparagine). The chain crosses the membrane as a helical span at residues 195–215 (ALTVIGFLLPFTALLACYCRM). The Cytoplasmic segment spans residues 216-236 (ARRLCRQDGPAGPVAQERRSK). The chain crosses the membrane as a helical span at residues 237-257 (AARMAVVVAAVFVISFLPFHI). Topologically, residues 258-280 (TKTAYLAVRSTPGVSCPVLETFA) are extracellular. The helical transmembrane segment at 281-303 (AAYKGTRPFASANSVLDPILFYF) threads the bilayer. The Cytoplasmic segment spans residues 304–328 (TQQKFRRQPHDLLQKLTAKWQRQRV).

The protein belongs to the G-protein coupled receptor 1 family. As to expression, abundantly expressed in various tissues including lung, stomach, intestine, spleen, mesentery, heart, and, most prominently, aorta.

Its subcellular location is the cell membrane. Functionally, receptor for extracellular UTP &gt; ADP = 2-methylthio-ATP &gt; ADP-beta-S &gt; ATP = ATP-gamma-S. The activity of this receptor is mediated by G proteins which activate a phosphatidylinositol-calcium second messenger system. Functionally coupled to phospholipase C. This Rattus norvegicus (Rat) protein is P2Y purinoceptor 6 (P2ry6).